A 330-amino-acid chain; its full sequence is MWGLEVLLLLPMASFALYPEEILDTQWDLWKKTYRKQYNSKVDELSRRLIWEKNLKHISIHNLEASLGVHTYELAMNHLGDMTSEEVVQKMTGLKVPPSHSRSNDTLYIPDWESRAPDSVDYRKKGYVTPVKNQGQCGSCWAFSSVGALEGQLKKKTGKLLNLSPQNLVDCVSENDGCGGGYMTNAFQYVQKNRGIDSEDAYPYVGQDESCMYNPTGKAAKCRGYREIPEGNEKALKRAVARVGPISVAIDASLTSFQFYSKGVYYDENCNSDNLNHAVLAVGYGIQKGNKHWIIKNSWGENWGNKGYILMARNKNNACGIANLASFPKM.

The first 16 residues, methionine 1 to alanine 16, serve as a signal peptide directing secretion. The propeptide at leucine 17–arginine 115 is activation peptide. Asparagine 104 carries an N-linked (GlcNAc...) asparagine glycan. Disulfide bonds link cysteine 137–cysteine 178, cysteine 171–cysteine 211, and cysteine 270–cysteine 319. The active site involves cysteine 140. Residues histidine 277 and asparagine 297 contribute to the active site.

It belongs to the peptidase C1 family.

It is found in the lysosome. The protein localises to the secreted. Its subcellular location is the apical cell membrane. The enzyme catalyses Broad proteolytic activity. With small-molecule substrates and inhibitors, the major determinant of specificity is P2, which is preferably Leu, Met &gt; Phe, and not Arg.. Functionally, thiol protease involved in osteoclastic bone resorption and may participate partially in the disorder of bone remodeling. Displays potent endoprotease activity against fibrinogen at acid pH. May play an important role in extracellular matrix degradation. Involved in the release of thyroid hormone thyroxine (T4) by limited proteolysis of TG/thyroglobulin in the thyroid follicle lumen. This is Cathepsin K (CTSK) from Canis lupus familiaris (Dog).